The primary structure comprises 235 residues: MAGRLSESVGSGPGAEAETAADPDAKRDVLEHLCARTHLKQLVMEFDTACPPDEGCNSGAEVNFIESAKETLEEVGKVKSAFESKALVIKRIQLMDALRKRVKENDGCARLIVETMRDIIKLNWEIIQAHQQARVIRENLNDIRRKRYFLKQAEGEKALRIFTTVRKKKEVVRMKIAEKLKFIHRNVQYERKVTTLVQNILQNIIVGCQINWAKDPSLRAIILQLEKDISIQNLL.

A disordered region spans residues Met-1–Pro-23. The stretch at Glu-125 to Arg-145 forms a coiled coil.

The protein belongs to the CENP-H/MCM16 family. Component of the CENPA-HI complex, at least composed of CENPH, CENPI, CENPK, CENPL, CENPM, CENPO and CENPP. Interacts with NDC80.

It is found in the nucleus. The protein localises to the chromosome. It localises to the centromere. Its subcellular location is the kinetochore. In terms of biological role, component of the CENPA-HI complex, a centromeric complex involved in assembly of kinetochore proteins, mitotic progression and chromosome segregation. Required for the localization of CENPC but not CENPA to the centromere. It however may be involved in incorporation of newly synthesized CENPA into centromeres via its interaction with the CENPA-NAC complex. The chain is Centromere protein H (CENPH) from Gallus gallus (Chicken).